The following is a 296-amino-acid chain: Putative ankyrin repeat protein FPV216 (296 aa).

ANK repeat units follow at residues 73–102 (SYVNPLIYAIECDNHDAILSLIRYGADVNT) and 107–136 (LVITPLYISVLHGCPKCVEILLYYGANINI).

The protein is Putative ankyrin repeat protein FPV216 of Fowlpox virus (strain NVSL) (FPV).